We begin with the raw amino-acid sequence, 451 residues long: Secreted RxLR effector protein 111 (451 aa).

An N-terminal signal peptide occupies residues 1–19; it reads MRGTLATALLLVASCRIAA. The short motif at 48-69 is the RxLR-dEER element; the sequence is RFLRDNREQRVALALTAANESR. Asparagine 66 carries N-linked (GlcNAc...) asparagine glycosylation. 2 stretches are compositionally biased toward polar residues: residues 175-184 and 413-426; these read RKTLSKTQFK and SPAS…QRTG. Disordered stretches follow at residues 175–194 and 404–451; these read RKTL…STKR and IPLQ…NKHA. Basic and acidic residues predominate over residues 437 to 451; that stretch reads PERDSFRHIESNKHA.

This sequence belongs to the RxLR effector family.

The protein resides in the secreted. Its subcellular location is the host nucleus. In terms of biological role, secreted effector that acts as an elicitor that induces cell death in host plant cells. This is Secreted RxLR effector protein 111 from Plasmopara viticola (Downy mildew of grapevine).